The following is a 386-amino-acid chain: DNA-directed RNA polymerase subunit Rpo1C (386 aa).

Belongs to the RNA polymerase beta' chain family. As to quaternary structure, part of the RNA polymerase complex.

The protein localises to the cytoplasm. It catalyses the reaction RNA(n) + a ribonucleoside 5'-triphosphate = RNA(n+1) + diphosphate. In terms of biological role, DNA-dependent RNA polymerase (RNAP) catalyzes the transcription of DNA into RNA using the four ribonucleoside triphosphates as substrates. Forms part of the jaw domain. The polypeptide is DNA-directed RNA polymerase subunit Rpo1C (Methanococcus vannielii (strain ATCC 35089 / DSM 1224 / JCM 13029 / OCM 148 / SB)).